The following is a 369-amino-acid chain: Peptide chain release factor 2 (369 aa).

Gln-251 is subject to N5-methylglutamine.

This sequence belongs to the prokaryotic/mitochondrial release factor family. Methylated by PrmC. Methylation increases the termination efficiency of RF2.

The protein resides in the cytoplasm. Peptide chain release factor 2 directs the termination of translation in response to the peptide chain termination codons UGA and UAA. The chain is Peptide chain release factor 2 from Chlamydia trachomatis serovar A (strain ATCC VR-571B / DSM 19440 / HAR-13).